Reading from the N-terminus, the 142-residue chain is MKTFVAKPETVKRDWYVVDAEGKTLGRIATEIALRLRGKHKVEYTPHVDTGDYIIVINAEKVTVTGNKFKNKVYYSHSGFPGGLKSTTFDKLQAAKPEMIIEKAVKGMLPRGPLGRAMYRKLKVYTGTEHNHAAQQPQVLDI.

This sequence belongs to the universal ribosomal protein uL13 family. Part of the 50S ribosomal subunit.

Functionally, this protein is one of the early assembly proteins of the 50S ribosomal subunit, although it is not seen to bind rRNA by itself. It is important during the early stages of 50S assembly. The polypeptide is Large ribosomal subunit protein uL13 (Pseudoalteromonas translucida (strain TAC 125)).